The sequence spans 424 residues: Phosphomethylpyrimidine synthase (424 aa).

Substrate is bound by residues Asn-66, Met-95, Tyr-124, His-163, 185–187 (SRG), 226–229 (DGMR), and Glu-265. Zn(2+) is bound at residue His-269. Phe-292 lines the substrate pocket. His-333 contributes to the Zn(2+) binding site. 3 residues coordinate [4Fe-4S] cluster: Cys-408, Cys-411, and Cys-415.

Belongs to the ThiC family. The cofactor is [4Fe-4S] cluster.

The catalysed reaction is 5-amino-1-(5-phospho-beta-D-ribosyl)imidazole + S-adenosyl-L-methionine = 4-amino-2-methyl-5-(phosphooxymethyl)pyrimidine + CO + 5'-deoxyadenosine + formate + L-methionine + 3 H(+). It participates in cofactor biosynthesis; thiamine diphosphate biosynthesis. Its function is as follows. Catalyzes the synthesis of the hydroxymethylpyrimidine phosphate (HMP-P) moiety of thiamine from aminoimidazole ribotide (AIR) in a radical S-adenosyl-L-methionine (SAM)-dependent reaction. The sequence is that of Phosphomethylpyrimidine synthase from Thermotoga neapolitana (strain ATCC 49049 / DSM 4359 / NBRC 107923 / NS-E).